We begin with the raw amino-acid sequence, 423 residues long: Putative galacturan 1,4-alpha-galacturonidase C (423 aa).

An N-terminal signal peptide occupies residues 1–20; it reads MRFSIISLVSLPLFLGLTYA. N-linked (GlcNAc...) asparagine glycans are attached at residues asparagine 100, asparagine 120, asparagine 150, asparagine 173, and asparagine 185. Aspartate 229 (proton donor) is an active-site residue. A disulfide bridge connects residues cysteine 231 and cysteine 248. Asparagine 245 carries N-linked (GlcNAc...) asparagine glycosylation. Residue asparagine 252 is part of the active site. Asparagine 344 and asparagine 362 each carry an N-linked (GlcNAc...) asparagine glycan. Cysteine 379 and cysteine 385 form a disulfide bridge. Residue asparagine 400 is glycosylated (N-linked (GlcNAc...) asparagine). Cysteine 409 and cysteine 423 are joined by a disulfide.

This sequence belongs to the glycosyl hydrolase 28 family.

The protein localises to the secreted. It catalyses the reaction [(1-&gt;4)-alpha-D-galacturonosyl](n) + H2O = alpha-D-galacturonate + [(1-&gt;4)-alpha-D-galacturonosyl](n-1). Functionally, specific in hydrolyzing the terminal glycosidic bond of polygalacturonic acid and oligogalacturonates. In Neosartorya fischeri (strain ATCC 1020 / DSM 3700 / CBS 544.65 / FGSC A1164 / JCM 1740 / NRRL 181 / WB 181) (Aspergillus fischerianus), this protein is Putative galacturan 1,4-alpha-galacturonidase C (rgxC).